The following is a 545-amino-acid chain: Periplasmic trehalase (545 aa).

The first 30 residues, 1–30 (MPDRTALPRAMLAAWVLLLLAACSQGPAPT), serve as a signal peptide directing secretion. Residues Arg160, 167–168 (WD), Asn204, 213–215 (RSQ), 285–287 (RQE), and Gly318 contribute to the substrate site. Active-site proton donor/acceptor residues include Asp320 and Glu503. Substrate is bound at residue Glu518.

Belongs to the glycosyl hydrolase 37 family.

The protein resides in the periplasm. It carries out the reaction alpha,alpha-trehalose + H2O = alpha-D-glucose + beta-D-glucose. Its function is as follows. Provides the cells with the ability to utilize trehalose at high osmolarity by splitting it into glucose molecules that can subsequently be taken up by the phosphotransferase-mediated uptake system. In Pseudomonas aeruginosa (strain ATCC 15692 / DSM 22644 / CIP 104116 / JCM 14847 / LMG 12228 / 1C / PRS 101 / PAO1), this protein is Periplasmic trehalase.